A 146-amino-acid chain; its full sequence is Leptin (146 aa).

Cysteines 96 and 146 form a disulfide.

This sequence belongs to the leptin family.

Its subcellular location is the secreted. Its function is as follows. Key player in the regulation of energy balance and body weight control. Once released into the circulation, has central and peripheral effects by binding LEPR, found in many tissues, which results in the activation of several major signaling pathways. In the hypothalamus, acts as an appetite-regulating factor that induces a decrease in food intake and an increase in energy consumption by inducing anorexinogenic factors and suppressing orexigenic neuropeptides, also regulates bone mass and secretion of hypothalamo-pituitary-adrenal hormones. In the periphery, increases basal metabolism, influences reproductive function, regulates pancreatic beta-cell function and insulin secretion, is pro-angiogenic for endothelial cell and affects innate and adaptive immunity. In the arcuate nucleus of the hypothalamus, activates by depolarization POMC neurons inducing FOS and SOCS3 expression to release anorexigenic peptides and inhibits by hyperpolarization NPY neurons inducing SOCS3 with a consequent reduction on release of orexigenic peptides. In addition to its known satiety inducing effect, has a modulatory role in nutrient absorption. In the intestine, reduces glucose absorption by enterocytes by activating PKC and leading to a sequential activation of p38, PI3K and ERK signaling pathways which exerts an inhibitory effect on glucose absorption. Acts as a growth factor on certain tissues, through the activation of different signaling pathways increases expression of genes involved in cell cycle regulation such as CCND1, via JAK2-STAT3 pathway, or VEGFA, via MAPK1/3 and PI3K-AKT1 pathways. May also play an apoptotic role via JAK2-STAT3 pathway and up-regulation of BIRC5 expression. Pro-angiogenic, has mitogenic activity on vascular endothelial cells and plays a role in matrix remodeling by regulating the expression of matrix metalloproteinases (MMPs) and tissue inhibitors of metalloproteinases (TIMPs). In innate immunity, modulates the activity and function of neutrophils by increasing chemotaxis and the secretion of oxygen radicals. Increases phagocytosis by macrophages and enhances secretion of pro-inflammatory mediators. Increases cytotoxic ability of NK cells. Plays a pro-inflammatory role, in synergy with IL1B, by inducing NOS2 which promotes the production of IL6, IL8 and Prostaglandin E2, through a signaling pathway that involves JAK2, PI3K, MAP2K1/MEK1 and MAPK14/p38. In adaptive immunity, promotes the switch of memory T-cells towards T helper-1 cell immune responses. Increases CD4(+)CD25(-) T-cell proliferation and reduces autophagy during TCR (T-cell receptor) stimulation, through MTOR signaling pathway activation and BCL2 up-regulation. The protein is Leptin (LEP) of Pongo pygmaeus (Bornean orangutan).